We begin with the raw amino-acid sequence, 193 residues long: Probable nicotinate-nucleotide adenylyltransferase (193 aa).

This sequence belongs to the NadD family.

The catalysed reaction is nicotinate beta-D-ribonucleotide + ATP + H(+) = deamido-NAD(+) + diphosphate. It participates in cofactor biosynthesis; NAD(+) biosynthesis; deamido-NAD(+) from nicotinate D-ribonucleotide: step 1/1. Its function is as follows. Catalyzes the reversible adenylation of nicotinate mononucleotide (NaMN) to nicotinic acid adenine dinucleotide (NaAD). In Coprothermobacter proteolyticus (strain ATCC 35245 / DSM 5265 / OCM 4 / BT), this protein is Probable nicotinate-nucleotide adenylyltransferase.